The primary structure comprises 341 residues: Sulfate/thiosulfate import ATP-binding protein CysA 2 (341 aa).

An ABC transporter domain is found at 3 to 235 (IRLENVVKTF…PNSSFVMRFL (233 aa)). Residue 35–42 (GPSGSGKT) participates in ATP binding.

Belongs to the ABC transporter superfamily. Sulfate/tungstate importer (TC 3.A.1.6) family. In terms of assembly, the complex is composed of two ATP-binding proteins (CysA), two transmembrane proteins (CysT and CysW) and a solute-binding protein (CysP).

It is found in the cell inner membrane. The enzyme catalyses sulfate(out) + ATP + H2O = sulfate(in) + ADP + phosphate + H(+). The catalysed reaction is thiosulfate(out) + ATP + H2O = thiosulfate(in) + ADP + phosphate + H(+). Part of the ABC transporter complex CysAWTP involved in sulfate/thiosulfate import. Responsible for energy coupling to the transport system. This is Sulfate/thiosulfate import ATP-binding protein CysA 2 from Agrobacterium fabrum (strain C58 / ATCC 33970) (Agrobacterium tumefaciens (strain C58)).